We begin with the raw amino-acid sequence, 560 residues long: NADH-quinone oxidoreductase subunit C/D (560 aa).

The NADH dehydrogenase I subunit C stretch occupies residues 2–157 (NKLENLKQLL…NNQQACTNSL (156 aa)). An NADH dehydrogenase I subunit D region spans residues 175–560 (KYLPLNIGPS…MNLIAGELDR (386 aa)).

It in the N-terminal section; belongs to the complex I 30 kDa subunit family. In the C-terminal section; belongs to the complex I 49 kDa subunit family. As to quaternary structure, NDH-1 is composed of 13 different subunits. Subunits NuoB, CD, E, F, and G constitute the peripheral sector of the complex.

The protein resides in the cytoplasm. The protein localises to the cell inner membrane. It carries out the reaction a quinone + NADH + 5 H(+)(in) = a quinol + NAD(+) + 4 H(+)(out). In terms of biological role, NDH-1 shuttles electrons from NADH, via FMN and iron-sulfur (Fe-S) centers, to quinones in the respiratory chain. The immediate electron acceptor for the enzyme in this species is believed to be ubiquinone. Couples the redox reaction to proton translocation (for every two electrons transferred, four hydrogen ions are translocated across the cytoplasmic membrane), and thus conserves the redox energy in a proton gradient. This Bdellovibrio bacteriovorus (strain ATCC 15356 / DSM 50701 / NCIMB 9529 / HD100) protein is NADH-quinone oxidoreductase subunit C/D.